Consider the following 200-residue polypeptide: GMP synthase [glutamine-hydrolyzing] subunit A (200 aa).

In terms of domain architecture, Glutamine amidotransferase type-1 spans lysine 3–isoleucine 193. The active-site Nucleophile is the cysteine 80. Residues histidine 167 and glutamate 169 contribute to the active site.

As to quaternary structure, heterodimer composed of a glutamine amidotransferase subunit (A) and a GMP-binding subunit (B).

It catalyses the reaction XMP + L-glutamine + ATP + H2O = GMP + L-glutamate + AMP + diphosphate + 2 H(+). Its pathway is purine metabolism; GMP biosynthesis; GMP from XMP (L-Gln route): step 1/1. Functionally, catalyzes the synthesis of GMP from XMP. This Thermoplasma acidophilum (strain ATCC 25905 / DSM 1728 / JCM 9062 / NBRC 15155 / AMRC-C165) protein is GMP synthase [glutamine-hydrolyzing] subunit A.